The sequence spans 181 residues: LECEICTAPGLECNSWTKTCDANQDTCVTFQTEVIKAPVSFTFISKSCGTSDTCALNYVQTSPHNKLTHKSQRTCCTGEECKTLPPPVLEHKVNQPDGLQCPGCFGLSTKDCTEHLVSCRGPENQCLSITGKEFGFIFRALSYKGCATESLCSLFEKRFWNVLEDVEVDFKCTPALPKSSQ.

8 disulfide bridges follow: Cys3/Cys27, Cys6/Cys13, Cys20/Cys48, Cys54/Cys75, Cys76/Cys81, Cys101/Cys126, Cys119/Cys146, and Cys152/Cys172.

The protein belongs to the CNF-like-inhibitor family. As to quaternary structure, heterotrimer of 2 subunits A and 1 subunit B. In terms of tissue distribution, expressed by the liver.

The protein localises to the secreted. In terms of biological role, strongly inhibits its own venom PLA2 and all other PLA2s tested including Elapid, Crotalid and Viperid venom PLA2s, as well as honeybee PLA2s. In Laticauda semifasciata (Black-banded sea krait), this protein is Phospholipase A2 inhibitor gamma subunit B.